The chain runs to 323 residues: MPKTFANPQLTKNGELKHLLSIEGLSRDILTDVLDTAQQFVSVSDSDREVKKVPLLRGKSVFNLFFENSTRTRTTFEIAAKRLSADVINLNINASSTSKGESLLDTINNLSAMQADMFVVRHASSGAPYLIAEHVAPHVHVINAGDGRHAHPTQGLLDMFTIRHYKKDFSNLTVAIVGDILHSRVARSDIHALTTLGCAEVRAIGPRTLLPGGLEHMGVRVFHNMEEGLKGVDVVIMLRLQNERMSGALLPSAQEYFKAYGLTQDRLALAKPDAIVMHPGPMNRGVEIDSAVADGVQSVILNQVTFGIAVRMAVMGIVAGNND.

The carbamoyl phosphate site is built by R71 and T72. K99 contributes to the L-aspartate binding site. Carbamoyl phosphate-binding residues include R121, H151, and Q154. Positions 184 and 239 each coordinate L-aspartate. Carbamoyl phosphate-binding residues include G280 and P281.

It belongs to the aspartate/ornithine carbamoyltransferase superfamily. ATCase family. In terms of assembly, heterododecamer (2C3:3R2) of six catalytic PyrB chains organized as two trimers (C3), and six regulatory PyrI chains organized as three dimers (R2).

It catalyses the reaction carbamoyl phosphate + L-aspartate = N-carbamoyl-L-aspartate + phosphate + H(+). Its pathway is pyrimidine metabolism; UMP biosynthesis via de novo pathway; (S)-dihydroorotate from bicarbonate: step 2/3. Catalyzes the condensation of carbamoyl phosphate and aspartate to form carbamoyl aspartate and inorganic phosphate, the committed step in the de novo pyrimidine nucleotide biosynthesis pathway. In Ralstonia pickettii (strain 12J), this protein is Aspartate carbamoyltransferase catalytic subunit.